A 200-amino-acid polypeptide reads, in one-letter code: Cytochrome c biogenesis ATP-binding export protein CcmA (200 aa).

The ABC transporter domain occupies 1–199; the sequence is MRLTGRGLRC…AARELRIGGA (199 aa). 35–42 lines the ATP pocket; sequence GANGAGKT.

Belongs to the ABC transporter superfamily. CcmA exporter (TC 3.A.1.107) family. As to quaternary structure, the complex is composed of two ATP-binding proteins (CcmA) and two transmembrane proteins (CcmB).

Its subcellular location is the cell inner membrane. The catalysed reaction is heme b(in) + ATP + H2O = heme b(out) + ADP + phosphate + H(+). Its function is as follows. Part of the ABC transporter complex CcmAB involved in the biogenesis of c-type cytochromes; once thought to export heme, this seems not to be the case, but its exact role is uncertain. Responsible for energy coupling to the transport system. This chain is Cytochrome c biogenesis ATP-binding export protein CcmA, found in Rhodopseudomonas palustris (strain BisB18).